The following is a 396-amino-acid chain: Elongation factor Tu 2 (396 aa).

The region spanning 10 to 206 (KPHVNVGTIG…ALDTYIPTPK (197 aa)) is the tr-type G domain. Residues 19 to 26 (GHVDHGKT) are G1. 19 to 26 (GHVDHGKT) is a GTP binding site. Thr-26 provides a ligand contact to Mg(2+). A G2 region spans residues 60-64 (GITIS). Residues 81 to 84 (DCPG) form a G3 region. GTP is bound by residues 81-85 (DCPGH) and 136-139 (NKAD). The tract at residues 136-139 (NKAD) is G4. Positions 174-176 (SAL) are G5.

The protein belongs to the TRAFAC class translation factor GTPase superfamily. Classic translation factor GTPase family. EF-Tu/EF-1A subfamily. As to quaternary structure, monomer.

Its subcellular location is the cytoplasm. It carries out the reaction GTP + H2O = GDP + phosphate + H(+). GTP hydrolase that promotes the GTP-dependent binding of aminoacyl-tRNA to the A-site of ribosomes during protein biosynthesis. The polypeptide is Elongation factor Tu 2 (Ruthia magnifica subsp. Calyptogena magnifica).